The sequence spans 142 residues: Hemoglobin subunit alpha-1 (142 aa).

The residue at position 1 (Ser-1) is an N-acetylserine. A Globin domain is found at 1-142 (SLSDKDKAAV…VALALAERYR (142 aa)). An O2-binding site is contributed by His-59. His-88 lines the heme b pocket.

It belongs to the globin family. Hb1 is a heterotetramer of two alpha-2 chains and two beta chains, while Hb2 is a heterotetramer of two alpha-2 chains and two beta chains. As to expression, red blood cells.

Its function is as follows. Involved in oxygen transport from gills to the various peripheral tissues. The polypeptide is Hemoglobin subunit alpha-1 (hba1) (Notothenia angustata (Rockcod)).